We begin with the raw amino-acid sequence, 64 residues long: Conotoxin VnMLCL-042 (64 aa).

The N-terminal stretch at 1-19 (MLCLPVFIILLLLASPAAP) is a signal peptide. Residues 20-43 (NPLQTRIQSNLIRAGPEDANMKTD) constitute a propeptide that is removed on maturation. At methionine 63 the chain carries Methionine amide.

The protein belongs to the conotoxin T superfamily. As to expression, expressed by the venom duct.

The protein localises to the secreted. The protein is Conotoxin VnMLCL-042 of Conus ventricosus (Mediterranean cone).